A 300-amino-acid polypeptide reads, in one-letter code: Probable protein phosphatase 2C 2 (300 aa).

In terms of domain architecture, PPM-type phosphatase spans 23-298; sequence IFAASEMQGW…DNMTTILVYL (276 aa). Positions 57, 58, 237, and 289 each coordinate Mn(2+).

Belongs to the PP2C family. It depends on Mg(2+) as a cofactor. Mn(2+) serves as cofactor.

It localises to the membrane. The catalysed reaction is O-phospho-L-seryl-[protein] + H2O = L-seryl-[protein] + phosphate. The enzyme catalyses O-phospho-L-threonyl-[protein] + H2O = L-threonyl-[protein] + phosphate. In terms of biological role, enzyme with a broad specificity. This is Probable protein phosphatase 2C 2 from Paramecium tetraurelia.